The following is a 216-amino-acid chain: Sperm microtubule inner protein 8 (216 aa).

In terms of assembly, microtubule inner protein component of sperm flagellar doublet microtubules. In terms of tissue distribution, expressed in sperm.

Its subcellular location is the cytoplasm. The protein resides in the cytoskeleton. The protein localises to the flagellum axoneme. In terms of biological role, microtubule inner protein (MIP) part of the dynein-decorated doublet microtubules (DMTs) in flagellum axoneme. May serve to reinforce and thus stabilize the microtubule structure in the sperm flagella. This Bos taurus (Bovine) protein is Sperm microtubule inner protein 8 (SPMIP8).